The sequence spans 47 residues: Glyceraldehyde-3-phosphate dehydrogenase, cytosolic (47 aa).

It belongs to the glyceraldehyde-3-phosphate dehydrogenase family. In terms of assembly, homotetramer.

It is found in the cytoplasm. It catalyses the reaction D-glyceraldehyde 3-phosphate + phosphate + NAD(+) = (2R)-3-phospho-glyceroyl phosphate + NADH + H(+). The protein operates within carbohydrate degradation; glycolysis; pyruvate from D-glyceraldehyde 3-phosphate: step 1/5. The sequence is that of Glyceraldehyde-3-phosphate dehydrogenase, cytosolic from Pseudotsuga menziesii (Douglas-fir).